Consider the following 103-residue polypeptide: N(4)-acetylcytidine amidohydrolase (103 aa).

Residues 7–93 (TFFERFEQDI…VIAEIYPGLE (87 aa)) enclose the ASCH domain. K21 (proton acceptor) is an active-site residue. T24 (nucleophile) is an active-site residue. The Proton donor role is filled by E74.

It belongs to the N(4)-acetylcytidine amidohydrolase family.

The enzyme catalyses N(4)-acetylcytidine + H2O = cytidine + acetate + H(+). It carries out the reaction N(4)-acetyl-2'-deoxycytidine + H2O = 2'-deoxycytidine + acetate + H(+). It catalyses the reaction N(4)-acetylcytosine + H2O = cytosine + acetate + H(+). Functionally, catalyzes the hydrolysis of N(4)-acetylcytidine (ac4C). The chain is N(4)-acetylcytidine amidohydrolase from Shewanella putrefaciens (strain CN-32 / ATCC BAA-453).